The chain runs to 144 residues: Large ribosomal subunit protein uL16 (144 aa).

The segment covering 1-14 has biased composition (basic residues); it reads MLTPKRVKHRKQHR. The segment at 1 to 22 is disordered; that stretch reads MLTPKRVKHRKQHRPSLAGKAN.

It belongs to the universal ribosomal protein uL16 family. As to quaternary structure, part of the 50S ribosomal subunit.

Functionally, binds 23S rRNA and is also seen to make contacts with the A and possibly P site tRNAs. The sequence is that of Large ribosomal subunit protein uL16 from Syntrophomonas wolfei subsp. wolfei (strain DSM 2245B / Goettingen).